The primary structure comprises 362 residues: Protein U8 (362 aa).

Belongs to the herpesviridae US22 family.

The polypeptide is Protein U8 (U8) (Human herpesvirus 7 (strain JI) (HHV-7)).